The sequence spans 219 residues: uncharacterized protein (219 aa).

The chain crosses the membrane as a helical span at residues 28–50 (IVSSLIAGGYALFVSAFTSYVYT). The stretch at 155–218 (EILRESLSEI…EEIEKELEFF (64 aa)) forms a coiled coil.

The protein resides in the membrane. This is an uncharacterized protein from Aquifex aeolicus (strain VF5).